The chain runs to 250 residues: MEKGPVRAPAEKPRGARCSNGFPERDPPRPGPSRPAEKPPRPEAKSAQPADGWKGERPRSEEDNELNLPNLAAAYSSILSSLGENPQRQGLLKTPWRAASAMQFFTKGYQETISDVLNDAIFDEDHDEMVIVKDIDMFSMCEHHLVPFVGKVHIGYLPNKQVLGLSKLARIVEIYSRRLQVQERLTKQIAVAITEALRPAGVGVVVEATHMCMVMRGVQKMNSKTVTSTMLGVFREDPKTREEFLTLIRS.

2 stretches are compositionally biased toward basic and acidic residues: residues 1 to 14 (MEKGPVRAPAEKPR) and 35 to 44 (PAEKPPRPEA). Residues 1-64 (MEKGPVRAPA…GERPRSEEDN (64 aa)) form a disordered region. Residues serine 60 and serine 81 each carry the phosphoserine modification. Cysteine 141, histidine 144, and cysteine 212 together coordinate Zn(2+).

The protein belongs to the GTP cyclohydrolase I family. Toroid-shaped homodecamer, composed of a dimer of pentamers. The inactive isoforms also form decamers and may possibly be incorporated into GCH1 heterodecamers, decreasing enzyme stability and activity. Interacts with AHSA1 and GCHFR/GFRP. Phosphorylated by casein kinase II at Ser-81 in HAECs during oscillatory shear stress; phosphorylation at Ser-81 results in increased enzyme activity. In terms of tissue distribution, in epidermis, expressed predominantly in basal undifferentiated keratinocytes and in some but not all melanocytes (at protein level).

Its subcellular location is the cytoplasm. It is found in the nucleus. The enzyme catalyses GTP + H2O = 7,8-dihydroneopterin 3'-triphosphate + formate + H(+). Its pathway is cofactor biosynthesis; 7,8-dihydroneopterin triphosphate biosynthesis; 7,8-dihydroneopterin triphosphate from GTP: step 1/1. With respect to regulation, GTP shows a positive allosteric effect, and tetrahydrobiopterin inhibits the enzyme activity. Zinc is required for catalytic activity. Inhibited by Mg(2+). Functionally, positively regulates nitric oxide synthesis in umbilical vein endothelial cells (HUVECs). May be involved in dopamine synthesis. May modify pain sensitivity and persistence. Isoform GCH-1 is the functional enzyme, the potential function of the enzymatically inactive isoforms remains unknown. This chain is GTP cyclohydrolase 1 (GCH1), found in Homo sapiens (Human).